Consider the following 395-residue polypeptide: MPNKKTIRDIDLKGKRVLVRVDFNVPIDNQGNIEDDARIRAAIPTIEYLLDAKAIVILMSHLGRPKGFDEKYSLKPVAKRLSRYIHKDVVMAPDCIGKDMENIVKNAKSEDVIMLENLRFHKEEEECDEEFSKKLASLGEVYVSDAFGTCHRKHASVYCVPQILKPACMGFLLEKELLYFEKAMVNPQRPVVAFLGGAKVSSKLNVIKNLLKRVDKMFIGGAMAFTFIKAMRYDTGKSLVENDLIDVAKDIIDISKKLGVKFYLPVDFIVGKELSDNTPIKTVLWQEIPQDYMGLDIGPVSISLAKELIGTAQTIVWNGPMGAFEYERFKDGTLEVARAIAHSQALSIAGGGDTDHAIIRAGVINAIDFVSTGGGAFLELLEGKELPCISVLDDK.

Residues 22–24 (DFN), R38, 61–64 (HLGR), R119, and R152 contribute to the substrate site. ATP is bound by residues K203, G294, E325, and 351–354 (GGDT).

Belongs to the phosphoglycerate kinase family. In terms of assembly, monomer.

Its subcellular location is the cytoplasm. It catalyses the reaction (2R)-3-phosphoglycerate + ATP = (2R)-3-phospho-glyceroyl phosphate + ADP. It participates in carbohydrate degradation; glycolysis; pyruvate from D-glyceraldehyde 3-phosphate: step 2/5. The protein is Phosphoglycerate kinase of Hydrogenobaculum sp. (strain Y04AAS1).